Reading from the N-terminus, the 70-residue chain is Large ribosomal subunit protein eL38 (70 aa).

The protein belongs to the eukaryotic ribosomal protein eL38 family.

This is Large ribosomal subunit protein eL38 (RpL38) from Plutella xylostella (Diamondback moth).